The chain runs to 111 residues: Cytochrome b-c1 complex subunit 7 (111 aa).

Alanine 2 is modified (N-acetylalanine). Lysine 19 bears the N6-acetyllysine mark. Lysine 78 bears the N6-acetyllysine; alternate mark. The residue at position 78 (lysine 78) is an N6-succinyllysine; alternate. The residue at position 83 (lysine 83) is an N6-acetyllysine. Lysine 88 is modified (N6-acetyllysine; alternate). Residue lysine 88 is modified to N6-succinyllysine; alternate. Residue lysine 96 is modified to N6-acetyllysine.

Belongs to the UQCRB/QCR7 family. As to quaternary structure, component of the ubiquinol-cytochrome c oxidoreductase (cytochrome b-c1 complex, complex III, CIII), a multisubunit enzyme composed of 11 subunits. The complex is composed of 3 respiratory subunits cytochrome b, cytochrome c1 and Rieske protein UQCRFS1, 2 core protein subunits UQCRC1/QCR1 and UQCRC2/QCR2, and 6 low-molecular weight protein subunits UQCRH/QCR6, UQCRB/QCR7, UQCRQ/QCR8, UQCR10/QCR9, UQCR11/QCR10 and subunit 9, the cleavage product of Rieske protein UQCRFS1. The complex exists as an obligatory dimer and forms supercomplexes (SCs) in the inner mitochondrial membrane with NADH-ubiquinone oxidoreductase (complex I, CI) and cytochrome c oxidase (complex IV, CIV), resulting in different assemblies (supercomplex SCI(1)III(2)IV(1) and megacomplex MCI(2)III(2)IV(2)).

The protein localises to the mitochondrion inner membrane. Functionally, component of the ubiquinol-cytochrome c oxidoreductase, a multisubunit transmembrane complex that is part of the mitochondrial electron transport chain which drives oxidative phosphorylation. The respiratory chain contains 3 multisubunit complexes succinate dehydrogenase (complex II, CII), ubiquinol-cytochrome c oxidoreductase (cytochrome b-c1 complex, complex III, CIII) and cytochrome c oxidase (complex IV, CIV), that cooperate to transfer electrons derived from NADH and succinate to molecular oxygen, creating an electrochemical gradient over the inner membrane that drives transmembrane transport and the ATP synthase. The cytochrome b-c1 complex catalyzes electron transfer from ubiquinol to cytochrome c, linking this redox reaction to translocation of protons across the mitochondrial inner membrane, with protons being carried across the membrane as hydrogens on the quinol. In the process called Q cycle, 2 protons are consumed from the matrix, 4 protons are released into the intermembrane space and 2 electrons are passed to cytochrome c. The polypeptide is Cytochrome b-c1 complex subunit 7 (UQCRB) (Bos taurus (Bovine)).